The sequence spans 89 residues: Long neurotoxin homolog Pa ID (89 aa).

A signal peptide spans M1–T21. Cystine bridges form between C24–C42, C35–C63, C48–C52, C67–C78, and C79–C84.

Belongs to the three-finger toxin family. Long-chain subfamily. Type II alpha-neurotoxin sub-subfamily. In terms of tissue distribution, expressed by the venom gland.

The protein localises to the secreted. Its function is as follows. Binds with high affinity to muscular (alpha-1/CHRNA1) and neuronal (alpha-7/CHRNA7) nicotinic acetylcholine receptor (nAChR) and inhibits acetylcholine from binding to the receptor, thereby impairing neuromuscular and neuronal transmission. In Pseudechis australis (Mulga snake), this protein is Long neurotoxin homolog Pa ID.